The following is a 341-amino-acid chain: DER1-like family member protein 1 (341 aa).

Topologically, residues 1–41 (MAGPRNVRTLHGNGGRNNDVMGPKEFWLNIPPITRTLFTLA) are cytoplasmic. The chain crosses the membrane as a helical span at residues 42–62 (IVMTIVGRLNLINPWYFIYVW). Over 63 to 122 (NLTFKKVQIWRLLTSCVMLSSRAMPALMELYSIYDRSSQLERGHFGPGLSNRRGPMVTVD) the chain is Lumenal. The helical transmembrane segment at 123–143 (YAYYLCFCILAITTATTIIYG) threads the bilayer. The Cytoplasmic portion of the chain corresponds to 144-170 (SYYPVVLTSGFISCITYTWSIDNANVQ). Residues 171-191 (IMFYGLIPVWGKYFPLIQLFI) traverse the membrane as a helical segment. Residue Ser-192 is a topological domain, lumenal. Residues 193 to 213 (FVFNEGDFVISLIGFTTGYLY) traverse the membrane as a helical segment. Over 214–341 (TCLDTHTLGP…GQTNSPSDSQ (128 aa)) the chain is Cytoplasmic. Polar residues-rich tracts occupy residues 276 to 286 (SSQRETRTFSG) and 296 to 341 (ATLS…SDSQ). The tract at residues 276–341 (SSQRETRTFS…GQTNSPSDSQ (66 aa)) is disordered.

The protein belongs to the derlin family.

Its subcellular location is the endoplasmic reticulum membrane. Its function is as follows. May be involved in the degradation process of some misfolded endoplasmic reticulum (ER) luminal proteins. Its precise role is however unclear and its inability to complement der1 mutations, suggests either that it is not involved in degradation process of misfolded proteins, or that it participates in the destruction of specific misfolded ER luminal proteins. This Saccharomyces cerevisiae (strain ATCC 204508 / S288c) (Baker's yeast) protein is DER1-like family member protein 1 (DFM1).